Here is a 37-residue protein sequence, read N- to C-terminus: Large ribosomal subunit protein bL36 (37 aa).

It belongs to the bacterial ribosomal protein bL36 family.

The sequence is that of Large ribosomal subunit protein bL36 from Geobacter metallireducens (strain ATCC 53774 / DSM 7210 / GS-15).